An 89-amino-acid chain; its full sequence is Elongation factor 1-beta (89 aa).

This sequence belongs to the EF-1-beta/EF-1-delta family.

Promotes the exchange of GDP for GTP in EF-1-alpha/GDP, thus allowing the regeneration of EF-1-alpha/GTP that could then be used to form the ternary complex EF-1-alpha/GTP/AAtRNA. The sequence is that of Elongation factor 1-beta (ef1b) from Methanocaldococcus jannaschii (strain ATCC 43067 / DSM 2661 / JAL-1 / JCM 10045 / NBRC 100440) (Methanococcus jannaschii).